The primary structure comprises 369 residues: uncharacterized protein (369 aa).

9 consecutive transmembrane segments (helical) span residues 25–45 (QFVA…WYDW), 47–67 (FCLL…FVPA), 119–139 (LNIV…FNLM), 152–172 (LSGF…FSAL), 206–226 (HALN…LLFV), 235–255 (LKPL…SLYL), 272–292 (PIAL…GVFG), 296–316 (FGIY…TVFL), and 323–343 (LIFF…FTVA).

This sequence to B.subtilis ComEC.

The protein resides in the cell membrane. This is an uncharacterized protein from Mycoplasma genitalium (strain ATCC 33530 / DSM 19775 / NCTC 10195 / G37) (Mycoplasmoides genitalium).